The sequence spans 268 residues: Undecaprenyl-diphosphatase (268 aa).

6 consecutive transmembrane segments (helical) span residues 39-59, 75-95, 106-126, 179-199, 214-234, and 243-263; these read SETF…LIYK, LPYF…GLWV, LGPV…TEKV, TEFA…FAWI, LTLA…VKWL, and FIPF…LVAL.

This sequence belongs to the UppP family.

The protein resides in the cell inner membrane. It catalyses the reaction di-trans,octa-cis-undecaprenyl diphosphate + H2O = di-trans,octa-cis-undecaprenyl phosphate + phosphate + H(+). Catalyzes the dephosphorylation of undecaprenyl diphosphate (UPP). Confers resistance to bacitracin. This Methylacidiphilum infernorum (isolate V4) (Methylokorus infernorum (strain V4)) protein is Undecaprenyl-diphosphatase.